The chain runs to 105 residues: Large ribosomal subunit protein uL24 (105 aa).

Belongs to the universal ribosomal protein uL24 family. In terms of assembly, part of the 50S ribosomal subunit.

Functionally, one of two assembly initiator proteins, it binds directly to the 5'-end of the 23S rRNA, where it nucleates assembly of the 50S subunit. One of the proteins that surrounds the polypeptide exit tunnel on the outside of the subunit. The protein is Large ribosomal subunit protein uL24 of Parvibaculum lavamentivorans (strain DS-1 / DSM 13023 / NCIMB 13966).